The chain runs to 883 residues: MNEQYSALRSNVSMLGKVLGETIKDALGEHILERVETIRKLSKSSRAGNDANRQELLTTLQNLSNDELLPVARAFSQFLNLANTAEQYHSISPKGEAASNPEVIARTLRKLKNQPELSEDTIKKAVESLSLELVLTAHPTEITRRTLIHKMVEVNACLKQLDNKDIADYEHNQLMRRLRQLIAQSWHTDEIRKLRPSPVDEAKWGFAVVENSLWQGVPNYLRELNEQLEENLGYKLPVEFVPVRFTSWMGGDRDGNPNVTADITRHVLLLSRWKATDLFLKDIQVLVSELSMVEATPELLALVGEEGAAEPYRYLMKNLRSRLMATQAWLEARLKGEELPKPEGLLTQNEELWEPLYACYQSLQACGMGIIANGDLLDTLRRVKCFGVPLVRIDIRQESTRHTEALGELTRYLGIGDYESWSEADKQAFLIRELNSKRPLLPRNWQPSAETREVLDTCQVIAEAPQGSIAAYVISMAKTPSDVLAVHLLLKEAGIGFAMPVAPLFETLDDLNNANDVMTQLLNIDWYRGLIQGKQMVMIGYSDSAKDAGVMAASWAQYQAQDALIKTCEKAGIELTLFHGRGGSIGRGGAPAHAALLSQPPGSLKGGLRVTEQGEMIRFKYGLPEITVSSLSLYTGAILEANLLPPPELKESWRRIMDELSVISCDLYRGYVRENKDFVPYFRSATPEQELGKLPLGSRPAKRRPTGGVESLRAIPWIFAWTQNRLMLPAWLGAGTALQKVVEDGKQSELEAMCRDWPFFSTRLGMLEMVFAKADLWLAEYYDQRLVDKALWPLGKELRNLQEEDIKVVLAIANDSHLMADLPWIAESIQLRNIYTDPLNVLQAELLHRSRQAEKEGQEPDPRVEQALMVTIAGIAAGMRNTG.

Active-site residues include His-138 and Lys-546.

Belongs to the PEPCase type 1 family. Requires Mg(2+) as cofactor.

It carries out the reaction oxaloacetate + phosphate = phosphoenolpyruvate + hydrogencarbonate. Forms oxaloacetate, a four-carbon dicarboxylic acid source for the tricarboxylic acid cycle. This is Phosphoenolpyruvate carboxylase from Shigella dysenteriae serotype 1 (strain Sd197).